The primary structure comprises 93 residues: Small ribosomal subunit protein uS19 (93 aa).

The protein belongs to the universal ribosomal protein uS19 family.

Its function is as follows. Protein S19 forms a complex with S13 that binds strongly to the 16S ribosomal RNA. In Dehalococcoides mccartyi (strain ATCC BAA-2266 / KCTC 15142 / 195) (Dehalococcoides ethenogenes (strain 195)), this protein is Small ribosomal subunit protein uS19.